We begin with the raw amino-acid sequence, 738 residues long: 1,4-alpha-glucan branching enzyme GlgB (738 aa).

The active-site Nucleophile is Asp417. Glu472 acts as the Proton donor in catalysis.

The protein belongs to the glycosyl hydrolase 13 family. GlgB subfamily. As to quaternary structure, monomer.

It catalyses the reaction Transfers a segment of a (1-&gt;4)-alpha-D-glucan chain to a primary hydroxy group in a similar glucan chain.. It functions in the pathway glycan biosynthesis; glycogen biosynthesis. In terms of biological role, catalyzes the formation of the alpha-1,6-glucosidic linkages in glycogen by scission of a 1,4-alpha-linked oligosaccharide from growing alpha-1,4-glucan chains and the subsequent attachment of the oligosaccharide to the alpha-1,6 position. This chain is 1,4-alpha-glucan branching enzyme GlgB, found in Burkholderia pseudomallei (strain 668).